The sequence spans 282 residues: 4-diphosphocytidyl-2-C-methyl-D-erythritol kinase (282 aa).

Residue Lys-9 is part of the active site. 98–108 (PMGGGLGGGSS) is a binding site for ATP. Asp-140 is a catalytic residue.

Belongs to the GHMP kinase family. IspE subfamily. As to quaternary structure, homodimer.

It catalyses the reaction 4-CDP-2-C-methyl-D-erythritol + ATP = 4-CDP-2-C-methyl-D-erythritol 2-phosphate + ADP + H(+). It functions in the pathway isoprenoid biosynthesis; isopentenyl diphosphate biosynthesis via DXP pathway; isopentenyl diphosphate from 1-deoxy-D-xylulose 5-phosphate: step 3/6. In terms of biological role, catalyzes the phosphorylation of the position 2 hydroxy group of 4-diphosphocytidyl-2C-methyl-D-erythritol. The polypeptide is 4-diphosphocytidyl-2-C-methyl-D-erythritol kinase (Salmonella heidelberg (strain SL476)).